The chain runs to 586 residues: CTP synthase 2 (586 aa).

Residues serine 300 to tyrosine 554 enclose the Glutamine amidotransferase type-1 domain. Catalysis depends on for GATase activity residues cysteine 399, histidine 526, and glutamate 528. The tract at residues serine 564–serine 586 is disordered. Residues serine 568, serine 571, and serine 574 each carry the phosphoserine modification.

Belongs to the CTP synthase family.

The catalysed reaction is UTP + L-glutamine + ATP + H2O = CTP + L-glutamate + ADP + phosphate + 2 H(+). The protein operates within pyrimidine metabolism; CTP biosynthesis via de novo pathway; CTP from UDP: step 2/2. Its function is as follows. Catalyzes the ATP-dependent amination of UTP to CTP with either L-glutamine or ammonia as the source of nitrogen. Constitutes the rate-limiting enzyme in the synthesis of cytosine nucleotides. In Bos taurus (Bovine), this protein is CTP synthase 2 (CTPS2).